The primary structure comprises 388 residues: Succinate--CoA ligase [ADP-forming] subunit beta (388 aa).

One can recognise an ATP-grasp domain in the interval 9–244 (KQLFKEFGLP…PSQDDAREAE (236 aa)). Residues Lys46, 53–55 (GRG), Glu99, Thr102, and Glu107 contribute to the ATP site. Residues Asn199 and Asp213 each contribute to the Mg(2+) site. Residues Asn264 and 321 to 323 (GIV) each bind substrate.

It belongs to the succinate/malate CoA ligase beta subunit family. In terms of assembly, heterotetramer of two alpha and two beta subunits. Mg(2+) is required as a cofactor.

The catalysed reaction is succinate + ATP + CoA = succinyl-CoA + ADP + phosphate. It carries out the reaction GTP + succinate + CoA = succinyl-CoA + GDP + phosphate. Its pathway is carbohydrate metabolism; tricarboxylic acid cycle; succinate from succinyl-CoA (ligase route): step 1/1. Functionally, succinyl-CoA synthetase functions in the citric acid cycle (TCA), coupling the hydrolysis of succinyl-CoA to the synthesis of either ATP or GTP and thus represents the only step of substrate-level phosphorylation in the TCA. The beta subunit provides nucleotide specificity of the enzyme and binds the substrate succinate, while the binding sites for coenzyme A and phosphate are found in the alpha subunit. This is Succinate--CoA ligase [ADP-forming] subunit beta from Idiomarina loihiensis (strain ATCC BAA-735 / DSM 15497 / L2-TR).